The sequence spans 424 residues: MYNTILKDTLSKGLFTAHQKVLIAVSGGIDSINLLQFLYQYQKELSISIGIAHINHGQRKESEKEEEYIRQWGQIHDVPVFISYFQGIFSEDRARNHRYNFFSKVMREEGYTALVTAHHADDQAETVFMRILRGSRLRYLSGIKQVSAFANGQLIRPFLPYKKELLPNIFHFEDASNASSDYLRNRIRNVYFPALERENNQLKDSLITLSEETECLFTALTDLTRSIEVTNCYDFLRQTHSVQEFLLQDYISKFPDLQVSKEQFRVILKLIRTKANIDYTIKSGYFLHKDYESFHITKIHPKTDSFKVEKRLELHNIQIFSQYLFSYGKFISQADITIPIYDTSPIILRRRKEGDRIFLGNHTKKIRRLFIDEKITLKEREEAVIGEQNKELIFVIVAGRTYLRKPSEHDIMKGKLYIENLEKR.

26–31 (SGGIDS) contacts ATP.

This sequence belongs to the tRNA(Ile)-lysidine synthase family.

The protein resides in the cytoplasm. The catalysed reaction is cytidine(34) in tRNA(Ile2) + L-lysine + ATP = lysidine(34) in tRNA(Ile2) + AMP + diphosphate + H(+). Its function is as follows. Ligates lysine onto the cytidine present at position 34 of the AUA codon-specific tRNA(Ile) that contains the anticodon CAU, in an ATP-dependent manner. Cytidine is converted to lysidine, thus changing the amino acid specificity of the tRNA from methionine to isoleucine. This chain is tRNA(Ile)-lysidine synthase, found in Streptococcus agalactiae serotype V (strain ATCC BAA-611 / 2603 V/R).